The following is a 54-amino-acid chain: MARNDIRPIIKLKSTAGTGYTYVTRKNKRNNPDRITLKKYDPVARKHVEFREER.

It belongs to the bacterial ribosomal protein bL33 family.

The chain is Large ribosomal subunit protein bL33 from Corynebacterium urealyticum (strain ATCC 43042 / DSM 7109).